The primary structure comprises 1167 residues: Phenyloxazoline synthase MbtB (1167 aa).

In terms of domain architecture, Carrier 1 spans 2-78 (EAVVTSSQTV…AWTRLVGERT (77 aa)). Residue Ser-39 is modified to O-(pantetheine 4'-phosphoryl)serine. Residues 78–100 (TAESPGAATQSGDTAASAGDPDA) form a disordered region. Residues 98-390 (PDAPFPLAPI…SSLMLDVDFT (293 aa)) form a condensation/cyclization region. Residues 575-967 (TYAELRERVL…RIAGVEAAVA (393 aa)) are adenylation. In terms of domain architecture, Carrier 2 spans 1054 to 1130 (VPSTALERAL…ALARRLVDHE (77 aa)). The residue at position 1089 (Ser-1089) is an O-(pantetheine 4'-phosphoryl)serine.

It belongs to the ATP-dependent AMP-binding enzyme family. MbtB subfamily. Requires pantetheine 4'-phosphate as cofactor. In terms of processing, 4'-phosphopantetheine is transferred from CoA to a specific serine in each of the two carrier protein domains, leading to their activation from apo to holo forms.

The protein operates within siderophore biosynthesis; mycobactin biosynthesis. Its function is as follows. Involved in the initial steps of the mycobactin biosynthetic pathway. Putatively couples activated salicylic acid with serine or threonine and cyclizes this precursor to the hydroxyphenyloxazoline ring system present in this class of siderophores. In Mycobacterium sp. (strain MCS), this protein is Phenyloxazoline synthase MbtB (mbtB).